Here is a 149-residue protein sequence, read N- to C-terminus: Urease accessory protein UreE (149 aa).

It belongs to the UreE family.

The protein localises to the cytoplasm. Its function is as follows. Involved in urease metallocenter assembly. Binds nickel. Probably functions as a nickel donor during metallocenter assembly. This is Urease accessory protein UreE from Ureaplasma urealyticum serovar 10 (strain ATCC 33699 / Western).